The sequence spans 117 residues: Large ribosomal subunit protein uL18 (117 aa).

It belongs to the universal ribosomal protein uL18 family. As to quaternary structure, part of the 50S ribosomal subunit; part of the 5S rRNA/L5/L18/L25 subcomplex. Contacts the 5S and 23S rRNAs.

This is one of the proteins that bind and probably mediate the attachment of the 5S RNA into the large ribosomal subunit, where it forms part of the central protuberance. This Vibrio campbellii (strain ATCC BAA-1116) protein is Large ribosomal subunit protein uL18.